A 345-amino-acid polypeptide reads, in one-letter code: NADPH-dependent oxidoreductase 2-alkenal reductase (345 aa).

NADP(+) contacts are provided by residues Pro52 to Tyr53, Ala163 to Gly169, Gly188, Lys192, Tyr208, Asn232, Cys254, Tyr260, Phe284 to Val286, Phe330, and Asn334 to Gly336. Residue Tyr53 coordinates substrate. Tyr260 lines the substrate pocket.

Belongs to the NADP-dependent oxidoreductase L4BD family. Homodimer. As to expression, expressed in leaves.

It is found in the cytoplasm. It localises to the nucleus. Its subcellular location is the nucleoplasm. The catalysed reaction is an n-alkanal + NAD(+) = an alk-2-enal + NADH + H(+). It catalyses the reaction an n-alkanal + NADP(+) = an alk-2-enal + NADPH + H(+). Inhibited by N-ethylmaleimide and p-chloromercuribenzoic acid. Involved in the detoxification of reactive carbonyls. Acts on lipid peroxide-derived reactive aldehydes. Specific to a double bond activated by an adjacent carbonyl group. Can use both quinones and diamide as substrates, but not menadione, ferricyanide or phylloquinone. Can use 4-hydroxy-(2E)-nonenal (HNE), 4-hydroxy-(2E)-hexenal (HHE), (2E)-nonenal, (2E)-hexenal, (2E)-pentenal, propenal (acrolein), 3-buten-2-one and 3-penten-2-one, but not (R)-(-)-carvone, n-nonanal, n-hexanal, (3Z)-hexanal, cyclohex-2-en-1-one or 12-oxo phytodienoic acid (OPDA) as electron acceptors. Catalyzes the reduction of the alpha,beta-unsaturated bond of 2-alkenals, of lipid peroxide-derived oxenes 9-oxo-10(E),12(Z)-octadecadienoic acid (9-KODE) and 13-oxo-9(Z),11(E)-octadecadienoic acid (13-KODE), as well as 4-oxo-(2E)-nonenal and 4-hydroxynonenal. Can use 12-oxo-10(E) dodecanoate (traumatin), trans-1,3 diphenyl-2-propenone, trans-1,4-diphenyl-2-butene-1,4-dione, 9-oxo-12,13-epoxy-(10E)-octadecenoic acid (trans-EKODE-1b) and 9,13-dihydroxy-10-oxo-11-octadecenoic acid as substrates. Catalyzes the reduction of the 7-8 double bond of phenylpropanal substrates, such as p-coumaryl aldehyde and coniferyl aldehyde (in vitro). Has activity towards toxic substrates, such as 4-hydroxy-(2E)-nonenal (in vitro). May play a distinct role in plant antioxidant defense and is possibly involved in NAD(P)/NAD(P)H homeostasis. This Arabidopsis thaliana (Mouse-ear cress) protein is NADPH-dependent oxidoreductase 2-alkenal reductase.